The primary structure comprises 194 residues: MNLMTMITGVVLAGGKARRMGGVDKGLLELNGKPLWQYVADALMTQLSHVVVNANRHQEIYQVSGLKVIEDSLADYPGPLAGMLSVMQQEAGEWFLFCPCDTPYIPHDLAARLTHQRKDAPVVWVHDGERDHPTIALVNRAIEPLLLEYLQAGERRVMAFMRLAGGHAVDFSDRKEAFINVNTPEELARWQEKR.

Residues 12–14 (LAG), Lys-25, Asn-53, Asp-71, and Asp-101 each bind GTP. Residue Asp-101 participates in Mg(2+) binding.

The protein belongs to the MobA family. In terms of assembly, monomer. The cofactor is Mg(2+).

Its subcellular location is the cytoplasm. The catalysed reaction is Mo-molybdopterin + GTP + H(+) = Mo-molybdopterin guanine dinucleotide + diphosphate. Its function is as follows. Transfers a GMP moiety from GTP to Mo-molybdopterin (Mo-MPT) cofactor (Moco or molybdenum cofactor) to form Mo-molybdopterin guanine dinucleotide (Mo-MGD) cofactor. This is Molybdenum cofactor guanylyltransferase from Escherichia coli O6:H1 (strain CFT073 / ATCC 700928 / UPEC).